A 338-amino-acid polypeptide reads, in one-letter code: MDSTRLPVIFLMGPTASGKTDLAMRLREHLPVELISVDSTLVYRGMDIGTAKPSPEELAAAPHRLIDIRDPAEPYSVADFLVDAEREISAIHRQGNIPLLVGGTMLYFRALLDGLAQMPAADTSVRAQIEADAAQFGWPYVHQQLAEVDPDVAADIHPNHSQRVSRALEVYRVSGKTMTQLRREQQASGDVRAFEDRYCVRQIAISPRDRAILHQRIEQRFHAMLAQGLVEEVRRLYQRGDLHTDLPAIRAVGYRQVWDYLDDKLHYDEMVARGIIATRQLAKRQFTWLRGWMTNEGARSTSENSQLHWLYTETEQGKPLAKEEIVRCALNFLKPTAI.

13–20 (GPTASGKT) serves as a coordination point for ATP. Position 15 to 20 (15 to 20 (TASGKT)) interacts with substrate. Interaction with substrate tRNA regions lie at residues 38 to 41 (DSTL) and 162 to 166 (QRVSR).

Belongs to the IPP transferase family. As to quaternary structure, monomer. Mg(2+) serves as cofactor.

The catalysed reaction is adenosine(37) in tRNA + dimethylallyl diphosphate = N(6)-dimethylallyladenosine(37) in tRNA + diphosphate. Its function is as follows. Catalyzes the transfer of a dimethylallyl group onto the adenine at position 37 in tRNAs that read codons beginning with uridine, leading to the formation of N6-(dimethylallyl)adenosine (i(6)A). This is tRNA dimethylallyltransferase from Cellvibrio japonicus (strain Ueda107) (Pseudomonas fluorescens subsp. cellulosa).